Reading from the N-terminus, the 350-residue chain is Galactokinase (350 aa).

14 to 17 (EHTD) serves as a coordination point for substrate. ATP-binding positions include Ser46 and 98–104 (GSGLSSS). The Mg(2+) site is built by Ser104 and Glu136. Catalysis depends on Asp148, which acts as the Proton acceptor. Tyr197 serves as a coordination point for substrate.

The protein belongs to the GHMP kinase family. GalK subfamily.

It localises to the cytoplasm. It carries out the reaction alpha-D-galactose + ATP = alpha-D-galactose 1-phosphate + ADP + H(+). It participates in carbohydrate metabolism; galactose metabolism. In terms of biological role, catalyzes the transfer of the gamma-phosphate of ATP to D-galactose to form alpha-D-galactose-1-phosphate (Gal-1-P). The chain is Galactokinase from Thermococcus kodakarensis (strain ATCC BAA-918 / JCM 12380 / KOD1) (Pyrococcus kodakaraensis (strain KOD1)).